Reading from the N-terminus, the 101-residue chain is Urease subunit beta (101 aa).

Belongs to the urease beta subunit family. As to quaternary structure, heterotrimer of UreA (gamma), UreB (beta) and UreC (alpha) subunits. Three heterotrimers associate to form the active enzyme.

Its subcellular location is the cytoplasm. The catalysed reaction is urea + 2 H2O + H(+) = hydrogencarbonate + 2 NH4(+). Its pathway is nitrogen metabolism; urea degradation; CO(2) and NH(3) from urea (urease route): step 1/1. The protein is Urease subunit beta of Rhizobium etli (strain ATCC 51251 / DSM 11541 / JCM 21823 / NBRC 15573 / CFN 42).